Reading from the N-terminus, the 268-residue chain is Ribosomal RNA small subunit methyltransferase A (268 aa).

S-adenosyl-L-methionine-binding residues include Asn19, Leu21, Gly46, Glu67, Asp92, and Asn113.

This sequence belongs to the class I-like SAM-binding methyltransferase superfamily. rRNA adenine N(6)-methyltransferase family. RsmA subfamily.

Its subcellular location is the cytoplasm. The enzyme catalyses adenosine(1518)/adenosine(1519) in 16S rRNA + 4 S-adenosyl-L-methionine = N(6)-dimethyladenosine(1518)/N(6)-dimethyladenosine(1519) in 16S rRNA + 4 S-adenosyl-L-homocysteine + 4 H(+). In terms of biological role, specifically dimethylates two adjacent adenosines (A1518 and A1519) in the loop of a conserved hairpin near the 3'-end of 16S rRNA in the 30S particle. May play a critical role in biogenesis of 30S subunits. This Tolumonas auensis (strain DSM 9187 / NBRC 110442 / TA 4) protein is Ribosomal RNA small subunit methyltransferase A.